The sequence spans 404 residues: Formate-dependent phosphoribosylglycinamide formyltransferase (404 aa).

Residues 25-26 and E85 contribute to the N(1)-(5-phospho-beta-D-ribosyl)glycinamide site; that span reads EL. ATP-binding positions include R118, K159, 164-169, 199-202, and E207; these read SSGKGQ and EGFI. Residues 123–318 form the ATP-grasp domain; the sequence is RLAAEELGLP…EFELHARAIL (196 aa). Residues E277 and E289 each contribute to the Mg(2+) site. N(1)-(5-phospho-beta-D-ribosyl)glycinamide contacts are provided by residues D296, K365, and 372–373; that span reads RR.

It belongs to the PurK/PurT family. Homodimer.

It carries out the reaction N(1)-(5-phospho-beta-D-ribosyl)glycinamide + formate + ATP = N(2)-formyl-N(1)-(5-phospho-beta-D-ribosyl)glycinamide + ADP + phosphate + H(+). It participates in purine metabolism; IMP biosynthesis via de novo pathway; N(2)-formyl-N(1)-(5-phospho-D-ribosyl)glycinamide from N(1)-(5-phospho-D-ribosyl)glycinamide (formate route): step 1/1. Its function is as follows. Involved in the de novo purine biosynthesis. Catalyzes the transfer of formate to 5-phospho-ribosyl-glycinamide (GAR), producing 5-phospho-ribosyl-N-formylglycinamide (FGAR). Formate is provided by PurU via hydrolysis of 10-formyl-tetrahydrofolate. The sequence is that of Formate-dependent phosphoribosylglycinamide formyltransferase from Burkholderia pseudomallei (strain 1106a).